A 351-amino-acid chain; its full sequence is N-formyl peptide receptor 2 (351 aa).

The Extracellular portion of the chain corresponds to 1–27 (METNFSTPLNEYEEVSYESAGYTVLRI). Residue asparagine 4 is glycosylated (N-linked (GlcNAc...) asparagine). The helical transmembrane segment at 28 to 50 (LPLVVLGVTFVLGVLGNGLVIWV) threads the bilayer. The Cytoplasmic portion of the chain corresponds to 51–61 (AGFRMTRTVTT). The helical transmembrane segment at 62–83 (ICYLNLALADFSFTATLPFLIV) threads the bilayer. The Extracellular segment spans residues 84–100 (SMAMGEKWPFGWFLCKL). The cysteines at positions 98 and 176 are disulfide-linked. A helical membrane pass occupies residues 101–121 (IHIVVDINLFGSVFLIGFIAL). Residues 122-140 (DRCICVLHPVWAQNHRTVS) lie on the Cytoplasmic side of the membrane. A helical transmembrane segment spans residues 141–162 (LAMKVIVGPWILALVLTLPVFL). The Extracellular portion of the chain corresponds to 163-205 (FLTTVTIPNGDTYCTFNFASWGGTPEERLKVAITMLTARGIIR). Residues 206–226 (FVIGFSLPMSIVAICYGLIAA) traverse the membrane as a helical segment. At 227-242 (KIHKKGMIKSSRPLRV) the chain is on the cytoplasmic side. Residues 243 to 266 (LTAVVASFFICWFPFQLVALLGTV) traverse the membrane as a helical segment. Topologically, residues 267–286 (WLKEMLFYGKYKIIDILVNP) are extracellular. The helical transmembrane segment at 287 to 306 (TSSLAFFNSCLNPMLYVFVG) threads the bilayer. The Cytoplasmic portion of the chain corresponds to 307–351 (QDFRERLIHSLPTSLERALSEDSAPTNDTAANSASPPAETELQAM). The segment at 325 to 351 (LSEDSAPTNDTAANSASPPAETELQAM) is disordered. Residues 329-341 (SAPTNDTAANSAS) are compositionally biased toward polar residues.

Belongs to the G-protein coupled receptor 1 family. As to quaternary structure, interacts with Amyloid-beta protein 42, product of APP; the interaction takes place at the cell surface and the complex is then rapidly internalized. (Microbial infection) Interacts with Staphylococcus aureus protein SSL13; this interaction leads to the activation of neutrophils. In terms of tissue distribution, detected in lung, bone marrow, neutrophils, spleen and testis.

The protein localises to the cell membrane. Low affinity receptor for N-formyl-methionyl peptides, which are powerful neutrophil chemotactic factors. Binding of FMLP to the receptor causes activation of neutrophils. This response is mediated via a G-protein that activates a phosphatidylinositol-calcium second messenger system. The activation of LXA4R could result in an anti-inflammatory outcome counteracting the actions of pro-inflammatory signals such as LTB4 (leukotriene B4). Receptor for the chemokine-like protein FAM19A5, mediating FAM19A5-stimulated macrophage chemotaxis and the inhibitory effect on TNFSF11/RANKL-induced osteoclast differentiation. Acts as a receptor for humanin. The sequence is that of N-formyl peptide receptor 2 (FPR2) from Homo sapiens (Human).